Consider the following 589-residue polypeptide: Progranulin (589 aa).

The first 17 residues, Met1–Gly17, serve as a signal peptide directing secretion. A glycan (N-linked (GlcNAc...) asparagine) is linked at Asn38. Disulfide bonds link Cys125-Cys138 and Cys132-Cys148. The N-linked (GlcNAc...) asparagine glycan is linked to Asn263. 10 disulfide bridges follow: Cys282/Cys294, Cys288/Cys304, Cys295/Cys312, Cys305/Cys319, Cys313/Cys326, Cys320/Cys333, Cys364/Cys376, Cys370/Cys386, Cys395/Cys408, and Cys402/Cys414. Asn373 carries an N-linked (GlcNAc...) asparagine glycan. An N-linked (GlcNAc...) asparagine glycan is attached at Asn526.

This sequence belongs to the granulin family. As to quaternary structure, progranulin is secreted as a homodimer. Interacts with SLPI; interaction protects progranulin from proteolysis. Interacts (via region corresponding to granulin-7 peptide) with CTSD; stabilizes CTSD and increases its proteolytic activity. Interacts (via region corresponding to granulin-7 peptide) with SORT1; this interaction mediates endocytosis and lysosome delivery of progranulin; interaction occurs at the neuronal cell surface in a stressed nervous system. Interacts with PSAP; facilitates lysosomal delivery of progranulin from the extracellular space and the biosynthetic pathway. Forms a complex with PSAP and M6PR; PSAP bridges the binding between progranulin and M6PR. Forms a complex with PSAP and SORT1; progranulin bridges the interaction between PSAP and SORT1; facilitates lysosomal targeting of PSAP via SORT1; interaction enhances PSAP uptake in primary cortical neurons. Interacts (via regions corresponding to granulin-2 and granulin-7 peptides) with GBA1; this interaction prevents aggregation of GBA1-SCARB2 complex via interaction with HSPA1A upon stress. Interacts (via region corresponding to granulin-7 peptide) with HSPA1A; mediates recruitment of HSPA1A to GBA1 and prevents GBA1 aggregation in response to stress. N-glycosylated. Post-translationally, cleaved by ELANE; proteolysis is blocked by SLPI and is concentration- and time-dependent and induces CXCL8/IL-8 production; granulin-3 and granulin-4 are resistant to ELANE. Cleaved by CTSL in lysosome thus regulating the maturation and turnover of progranulin within the lysosome. Highly expressed at the wound site and diminishes away from the wound. Not expressed in fibroblasts and endothelial cells in intact skin. In adult brain, expressed primarily in neurons and in resting and reactive microglia. Expressed in both neurons and microglia. Highly expressed in activated microglia in response to injury. Expressed in macrophage.

The protein localises to the secreted. Its subcellular location is the lysosome. In terms of biological role, secreted protein that acts as a key regulator of lysosomal function and as a growth factor involved in inflammation, wound healing and cell proliferation. Regulates protein trafficking to lysosomes, and also the activity of lysosomal enzymes. Also facilitates the acidification of lysosomes, causing degradation of mature CTSD by CTSB. In addition, functions as a wound-related growth factor that acts directly on dermal fibroblasts and endothelial cells to promote division, migration and the formation of capillary-like tubule structures. Also promotes epithelial cell proliferation by blocking TNF-mediated neutrophil activation preventing release of oxidants and proteases. Moreover, modulates inflammation in neurons by preserving neurons survival, axonal outgrowth and neuronal integrity. Its function is as follows. Inhibits epithelial cell proliferation and induces epithelial cells to secrete IL-8. Functionally, stabilizes CTSD through interaction with CTSD leading to maintain its aspartic-type peptidase activity. This chain is Progranulin (Grn), found in Mus musculus (Mouse).